Consider the following 97-residue polypeptide: Large ribosomal subunit protein uL30m (97 aa).

It belongs to the universal ribosomal protein uL30 family. In terms of assembly, component of the mitochondrial large ribosomal subunit (mt-LSU). Mature yeast 74S mitochondrial ribosomes consist of a small (37S) and a large (54S) subunit. The 37S small subunit contains a 15S ribosomal RNA (15S mt-rRNA) and at least 32 different proteins. The 54S large subunit contains a 21S rRNA (21S mt-rRNA) and at least 45 different proteins.

The protein resides in the mitochondrion. Its function is as follows. Component of the mitochondrial ribosome (mitoribosome), a dedicated translation machinery responsible for the synthesis of mitochondrial genome-encoded proteins, including at least some of the essential transmembrane subunits of the mitochondrial respiratory chain. The mitoribosomes are attached to the mitochondrial inner membrane and translation products are cotranslationally integrated into the membrane. This Schizosaccharomyces pombe (strain 972 / ATCC 24843) (Fission yeast) protein is Large ribosomal subunit protein uL30m (mrpl33).